Consider the following 739-residue polypeptide: Potassium transporter 26 (739 aa).

At 1–81 the chain is on the cytoplasmic side; it reads MEYHHRPHSP…RQVALLSFQS (81 aa). A helical membrane pass occupies residues 82–102; that stretch reads LGVVYGDLGTSPLYVFSSISL. Residues 103–112 are Extracellular-facing; the sequence is DDPGEADFVG. Residues 113-133 form a helical membrane-spanning segment; it reads ILSIILWTFTMICLVKYVFIV. Residues 134 to 198 lie on the Cytoplasmic side of the membrane; the sequence is LKADDHGEGG…KFLEQSTKWQ (65 aa). A helical membrane pass occupies residues 199–219; that stretch reads AVITYIVLAGTCMVLGDGALT. Topologically, residues 220–236 are extracellular; sequence PAISVLSAVQGIQSRSS. A helical membrane pass occupies residues 237 to 257; it reads SITQAHVVLLSVIILFILFFF. Over 258-268 the chain is Cytoplasmic; it reads QKHGTSKVSFT. A helical membrane pass occupies residues 269–289; that stretch reads FSPIMILWFTFVAFIGLYNII. Topologically, residues 290-318 are extracellular; that stretch reads KHYPPILKAVSPHYIIIYFIRNKRAAWET. A helical transmembrane segment spans residues 319-339; that stretch reads LGAIVLCITGAEAMFADLGHF. The Cytoplasmic segment spans residues 340–347; sequence NKSSIQMA. The chain crosses the membrane as a helical span at residues 348 to 368; sequence FSVIVYPSMILAYAGQAAFLV. Over 369–385 the chain is Extracellular; sequence KNPSKLSTTFYSSTPEP. Residues 386–406 traverse the membrane as a helical segment; the sequence is LFWPMFIIATLAAIVASQALI. Topologically, residues 407-437 are cytoplasmic; that stretch reads SASFSIIRQSIALGCFPRVTMKHTSGKHEGQ. A helical membrane pass occupies residues 438 to 458; sequence VYSPEINYFLMVACILITVGF. At 459–469 the chain is on the extracellular side; it reads KGGPEIGQAFG. Residues 470–490 traverse the membrane as a helical segment; it reads VAVIFVMLFTTNLMTVVMLII. Over 491–494 the chain is Cytoplasmic; sequence WESN. The chain crosses the membrane as a helical span at residues 495–515; that stretch reads IALASLFFVFFFSIEGIYMTS. Topologically, residues 516–519 are extracellular; sequence LMNK. Residues 520-540 traverse the membrane as a helical segment; sequence ILQGGWVPFAITAFFLIITLS. Over 541-739 the chain is Cytoplasmic; it reads WTYGRSKKGE…TLQVGMLYEI (199 aa).

The protein belongs to the HAK/KUP transporter (TC 2.A.72.3) family.

It localises to the membrane. In terms of biological role, high-affinity potassium transporter. The polypeptide is Potassium transporter 26 (HAK26) (Oryza sativa subsp. japonica (Rice)).